The sequence spans 262 residues: 14-3-3 protein epsilon (262 aa).

The tract at residues 236–262 is disordered; that stretch reads QAEEVDPNAGDGEPKEQIQDVEDQDVS. Ser262 is modified (phosphoserine).

It belongs to the 14-3-3 family. As to quaternary structure, homodimer. Interacts with phosphorylated yki. Interacts with pav (when serine phosphorylated); the interaction is necessary for association of the complex pav-14-3-3epsilon complex to the microtubules, thereby inhibiting microtubule sliding.

In terms of biological role, positively regulates Ras-mediated pathways. Acts downstream or parallel to Raf, but upstream of nuclear factors in Ras signaling. Three mutants have been isolated, that suppress the rough eye phenotype caused by mutated Ras1 (sev-Ras1 v12). Inhibits yki activity by restricting its nuclear localization. Together with pav, has a role in the inhibition of microtubule sliding during neurite outgrowth. The sequence is that of 14-3-3 protein epsilon (14-3-3epsilon) from Drosophila melanogaster (Fruit fly).